A 368-amino-acid polypeptide reads, in one-letter code: F-box only protein 28 (368 aa).

A compositionally biased stretch (basic and acidic residues) spans 1–11 (MAAASEERMAE). The disordered stretch occupies residues 1–56 (MAAASEERMAEEGGGGHGDGGSCSAAGSAQRQPPAPPSQAPPPGSQAPAAPALAPD). Positions 12–21 (EGGGGHGDGG) are enriched in gly residues. The span at 22-32 (SCSAAGSAQRQ) shows a compositional bias: low complexity. The span at 33–45 (PPAPPSQAPPPGS) shows a compositional bias: pro residues. Low complexity predominate over residues 46–55 (QAPAAPALAP). The region spanning 61–109 (NNTLVALPIVAIENILSFMSYDEISQLRLVCKRMDLVCQRMLNQGFLKV) is the F-box domain. Serine 235 and serine 242 each carry phosphoserine. Position 270 is a phosphothreonine (threonine 270). The tract at residues 328-368 (MESAVGTSSGSGQSEESPRKRRKATEAIDSLRKSKRLRNRK) is disordered. The residue at position 344 (serine 344) is a Phosphoserine.

Part of a SCF (SKP1-cullin-F-box) protein ligase complex.

The protein localises to the chromosome. Its subcellular location is the centromere. The protein resides in the kinetochore. Functionally, probably recognizes and binds to some phosphorylated proteins and promotes their ubiquitination and degradation. The protein is F-box only protein 28 (Fbxo28) of Mus musculus (Mouse).